We begin with the raw amino-acid sequence, 160 residues long: Photosystem I reaction center subunit XI (160 aa).

2 helical membrane passes run Leu-84–Val-104 and Phe-125–Glu-145.

The protein belongs to the PsaL family.

Its subcellular location is the cellular thylakoid membrane. The chain is Photosystem I reaction center subunit XI from Microcystis aeruginosa (strain NIES-843 / IAM M-2473).